Here is a 193-residue protein sequence, read N- to C-terminus: Xanthine phosphoribosyltransferase (193 aa).

Residues leucine 20 and asparagine 27 each coordinate xanthine. 128–132 is a 5-phospho-alpha-D-ribose 1-diphosphate binding site; it reads ANGDA. Xanthine is bound at residue lysine 156.

Belongs to the purine/pyrimidine phosphoribosyltransferase family. Xpt subfamily. As to quaternary structure, homodimer.

Its subcellular location is the cytoplasm. It carries out the reaction XMP + diphosphate = xanthine + 5-phospho-alpha-D-ribose 1-diphosphate. The protein operates within purine metabolism; XMP biosynthesis via salvage pathway; XMP from xanthine: step 1/1. Its function is as follows. Converts the preformed base xanthine, a product of nucleic acid breakdown, to xanthosine 5'-monophosphate (XMP), so it can be reused for RNA or DNA synthesis. The chain is Xanthine phosphoribosyltransferase from Staphylococcus saprophyticus subsp. saprophyticus (strain ATCC 15305 / DSM 20229 / NCIMB 8711 / NCTC 7292 / S-41).